The sequence spans 210 residues: Large ribosomal subunit protein uL3 (210 aa).

The tract at residues 125–151 (RHGQSRGPMSHGSRYHRRPGSMGPVAP) is disordered.

This sequence belongs to the universal ribosomal protein uL3 family. Part of the 50S ribosomal subunit. Forms a cluster with proteins L14 and L19.

One of the primary rRNA binding proteins, it binds directly near the 3'-end of the 23S rRNA, where it nucleates assembly of the 50S subunit. This Bacillus cereus (strain ATCC 14579 / DSM 31 / CCUG 7414 / JCM 2152 / NBRC 15305 / NCIMB 9373 / NCTC 2599 / NRRL B-3711) protein is Large ribosomal subunit protein uL3.